A 221-amino-acid polypeptide reads, in one-letter code: Large ribosomal subunit protein uL4 (221 aa).

A disordered region spans residues 56 to 83 (HATKTRGMVSGGGRKPWKQKGTGRARQG).

This sequence belongs to the universal ribosomal protein uL4 family. In terms of assembly, part of the 50S ribosomal subunit.

One of the primary rRNA binding proteins, this protein initially binds near the 5'-end of the 23S rRNA. It is important during the early stages of 50S assembly. It makes multiple contacts with different domains of the 23S rRNA in the assembled 50S subunit and ribosome. Its function is as follows. Forms part of the polypeptide exit tunnel. This Bifidobacterium adolescentis (strain ATCC 15703 / DSM 20083 / NCTC 11814 / E194a) protein is Large ribosomal subunit protein uL4.